A 265-amino-acid chain; its full sequence is MDWFQALVLALIQGLTEFLPISSSAHLILPSQILGWPDQGLAFDVAVHLGTLLAVMMYYRRDLIAMVGGAGLAVQQRRMNDDLKLGLLVALATIPAVVFGFLGDDFIERELRSALVIAITTLVFGALLWASDAFGKREFSLARLGVAGAIFIGLAQALALIPGTSRSGITITAALALGYRREDAARFSFLLSIPVILGAGLLKTKDLIEQQVVVDWGMMALGVIVSAVTAYLTIVFFIRLLERVGMLPFVVYRLILGVALLFWLA.

8 helical membrane passes run 1-21 (MDWFQALVLALIQGLTEFLPI), 39-59 (QGLAFDVAVHLGTLLAVMMYY), 83-103 (LKLGLLVALATIPAVVFGFLG), 114-134 (ALVIAITTLVFGALLWASDAF), 144-164 (LGVAGAIFIGLAQALALIPGT), 188-208 (SFLLSIPVILGAGLLKTKDLI), 218-238 (MMALGVIVSAVTAYLTIVFFI), and 244-264 (VGMLPFVVYRLILGVALLFWL).

Belongs to the UppP family.

Its subcellular location is the cell inner membrane. It carries out the reaction di-trans,octa-cis-undecaprenyl diphosphate + H2O = di-trans,octa-cis-undecaprenyl phosphate + phosphate + H(+). Its function is as follows. Catalyzes the dephosphorylation of undecaprenyl diphosphate (UPP). Confers resistance to bacitracin. The polypeptide is Undecaprenyl-diphosphatase (Alcanivorax borkumensis (strain ATCC 700651 / DSM 11573 / NCIMB 13689 / SK2)).